A 1502-amino-acid polypeptide reads, in one-letter code: Clustered mitochondria protein homolog (1502 aa).

Disordered stretches follow at residues 1 to 62 (MSES…EPLD), 571 to 615 (AQAE…NPMM), 755 to 799 (AEAE…EEDR), 1054 to 1085 (KDQE…GETV), 1381 to 1403 (ARER…RLGG), and 1429 to 1502 (GQGG…GAKR). Residues 7-35 (AAAQNGQAEEQQLQQQLDEQQQLEEQQQL) show a composition bias toward low complexity. Residues 53–62 (KPKDSTEPLD) show a composition bias toward basic and acidic residues. The 295-residue stretch at 399 to 693 (EILRTQLAFL…RLAPVDVEWL (295 aa)) folds into the Clu domain. The span at 575-586 (TEAEAETADAVE) shows a compositional bias: acidic residues. Residues 587–606 (GEQKKEDWVDVEKPTEKSGS) are compositionally biased toward basic and acidic residues. A compositionally biased stretch (low complexity) spans 781-792 (EEQSAAASAAAA). A compositionally biased stretch (basic and acidic residues) spans 1054 to 1069 (KDQEEEENKREENIKS). The segment covering 1429-1451 (GQGGNPSANAAAATAGQGEQANG) has biased composition (low complexity). Basic and acidic residues predominate over residues 1462–1471 (RGTESLEELV). Residues 1486 to 1502 (KRGKNALRGKRRTGAKR) show a composition bias toward basic residues.

This sequence belongs to the CLU family. May associate with the eukaryotic translation initiation factor 3 (eIF-3) complex.

The protein localises to the cytoplasm. Its function is as follows. mRNA-binding protein involved in proper cytoplasmic distribution of mitochondria. The chain is Clustered mitochondria protein homolog from Cryptococcus neoformans var. neoformans serotype D (strain B-3501A) (Filobasidiella neoformans).